We begin with the raw amino-acid sequence, 358 residues long: Endoplasmic reticulum junction formation protein lunapark-B (358 aa).

Topologically, residues 1–45 are cytoplasmic; it reads MGAIISRWKTKLTTVEQLENIDKEIKQLEEFRAKNQRLQKLWVGR. A coiled-coil region spans residues 9–41; sequence KTKLTTVEQLENIDKEIKQLEEFRAKNQRLQKL. Residues 46 to 66 form a helical membrane-spanning segment; that stretch reads LLLYSSALYLLISLFVYLLYL. Over 67-69 the chain is Lumenal; the sequence is PEQ. Residues 70 to 90 form a helical membrane-spanning segment; that stretch reads WLLRLAMALPFFIYPVLVWFI. The Cytoplasmic segment spans residues 91–358; it reads RRFLIFLFSK…SRGMDKHGRA (268 aa). A coiled-coil region spans residues 99 to 128; sequence SKRSERNNDKLEDLKATKKKILEEVMETET. The C4-type; plays a role in ER morphology zinc-finger motif lies at 275–300; sequence CQQCFSHNGMALKEEFEYLAFRCAYC. Positions 320-358 are disordered; the sequence is NFEKRLRAESSTPGPAPHSATDTEESAPPSRGMDKHGRA.

It belongs to the lunapark family. As to quaternary structure, homodimer; homodimerization requires the C4-type zinc finger motif and decreases during mitosis in a phosphorylation-dependent manner. Phosphorylated. Phosphorylation occurs during interphase. Phosphorylation also occurs during mitosis; these phosphorylations reduce both its homodimerization and the ER three-way tubular junction formation.

Its subcellular location is the endoplasmic reticulum membrane. Endoplasmic reticulum (ER)-shaping membrane protein that plays a role in determining ER morphology. Involved in the stabilization of nascent three-way ER tubular junctions within the ER network. May also play a role as a curvature-stabilizing protein within three-way ER tubular junction network. This is Endoplasmic reticulum junction formation protein lunapark-B (lnpkb) from Takifugu rubripes (Japanese pufferfish).